Reading from the N-terminus, the 403-residue chain is Heparan-sulfate 6-O-sulfotransferase 2 (403 aa).

Topologically, residues 1-7 are cytoplasmic; sequence MEDRSHK. The chain crosses the membrane as a helical; Signal-anchor for type II membrane protein span at residues 8–28; it reads VLLALVMLFLFAVIVLQYVCP. Residues 29 to 403 lie on the Lumenal side of the membrane; it reads GTECQLLRLR…DYLGNVERWR (375 aa). A glycan (N-linked (GlcNAc...) asparagine) is linked at asparagine 64. A 3'-phosphoadenylyl sulfate-binding site is contributed by 88–96; it reads HIQKTGGTT. Substrate is bound by residues 118 to 119, arginine 135, tryptophan 140, and histidine 145; that span reads KK. Histidine 145 serves as the catalytic Proton acceptor. 3'-phosphoadenylyl sulfate-binding residues include arginine 180 and serine 188. The substrate site is built by histidine 192 and tryptophan 199. N-linked (GlcNAc...) asparagine glycosylation occurs at asparagine 259. Residue 312-314 coordinates 3'-phosphoadenylyl sulfate; sequence TQY. An N-linked (GlcNAc...) asparagine glycan is attached at asparagine 315. 318-319 provides a ligand contact to 3'-phosphoadenylyl sulfate; sequence RA. The disordered stretch occupies residues 381 to 403; that stretch reads AHLREQGENSSSTDYLGNVERWR. An N-linked (GlcNAc...) asparagine glycan is attached at asparagine 389.

It belongs to the sulfotransferase 6 family.

It localises to the membrane. The catalysed reaction is alpha-D-glucosaminyl-[heparan sulfate](n) + 3'-phosphoadenylyl sulfate = 6-sulfo-alpha-D-glucosaminyl-[heparan sulfate](n) + adenosine 3',5'-bisphosphate + H(+). 6-O-sulfation enzyme which catalyzes the transfer of sulfate from 3'-phosphoadenosine 5'-phosphosulfate (PAPS) to position 6 of the N-sulfoglucosamine residue (GlcNS) of heparan sulfate. May also play a role in limb development. The polypeptide is Heparan-sulfate 6-O-sulfotransferase 2 (HS6ST2) (Gallus gallus (Chicken)).